A 1012-amino-acid chain; its full sequence is RAS protein activator like-3 (1012 aa).

Disordered stretches follow at residues 1 to 128 (MDPP…TPDV), 147 to 196 (GNED…QIHN), and 208 to 229 (KKAK…ALGS). Over residues 7-21 (SRASQTQPVAPSPLT) the composition is skewed to polar residues. Position 18 is a phosphoserine (serine 18). Gly residues predominate over residues 27-39 (SGGGAEKGAGGFR). A compositionally biased stretch (polar residues) spans 50–62 (QSHQETTASSQPA). Serine 51 is modified (phosphoserine). Over residues 100–113 (SEPEPENPEPEPEL) the composition is skewed to acidic residues. Serine 160, serine 162, serine 163, and serine 166 each carry phosphoserine. A compositionally biased stretch (low complexity) spans 160–171 (SASSESSIHVAS). Positions 175-186 (KDPDRTPGKTDP) are enriched in basic and acidic residues. Positions 193–294 (QIHNVRGLLK…WIEDLRRHFQ (102 aa)) constitute a PH domain. 4 positions are modified to phosphoserine: serine 212, serine 225, serine 229, and serine 232. Threonine 235 bears the Phosphothreonine mark. A C2 domain is found at 285–405 (WIEDLRRHFQ…APAAGLERWF (121 aa)). Residues 475 to 683 (GRAQALVTDL…PAMQHFLDQV (209 aa)) enclose the Ras-GAP domain. Residues 752-887 (PAPRTQGHSS…DKDQALGTHR (136 aa)) form a disordered region. Phosphoserine is present on residues serine 788 and serine 791. Positions 826-841 (PARRRPSAGPRPRPKG) are enriched in basic residues. The stretch at 889-989 (VGKLAELQCE…KDTIQNLQLL (101 aa)) forms a coiled coil. Over residues 990-999 (PRTSESQSQP) the composition is skewed to polar residues. The segment at 990-1012 (PRTSESQSQPVPLKAPCINGDTT) is disordered.

The protein localises to the cytoplasm. It is found in the cell cortex. Functions as a Ras GTPase-activating protein. Plays an important role in the expansion and functions of natural killer T (NKT) cells in the liver by negatively regulating RAS activity and the down-stream ERK signaling pathway. The sequence is that of RAS protein activator like-3 (RASAL3) from Bos taurus (Bovine).